We begin with the raw amino-acid sequence, 2170 residues long: Supervillin (2170 aa).

An interaction with MYLK region spans residues 1–167 (MKRKERIARR…NSRHSRTESG (167 aa)). Disordered stretches follow at residues 37–94 (EDTP…HSLE), 107–327 (RRRQ…QSES), 413–444 (PEPL…NKDL), 511–546 (DYTG…GAEA), and 567–643 (RASK…EDEE). Ser50 carries the post-translational modification Phosphoserine. Composition is skewed to polar residues over residues 63 to 73 (PGSSLEKQTPS) and 81 to 90 (GIHSSGSMDT). A compositionally biased stretch (basic and acidic residues) spans 134-166 (SRKDPDVTERRGKSDKQEEQSKDANSRHSRTES). A compositionally biased stretch (polar residues) spans 167 to 195 (GPRTSLVASQDCTPLGSNMSDQEQLLNVE). Phosphoserine occurs at positions 220, 227, and 241. Residues 230 to 241 (QIPSSPLQQPAS) show a composition bias toward polar residues. 2 stretches are compositionally biased toward basic and acidic residues: residues 261 to 272 (PTHEWFLQRDSE) and 286 to 297 (KVREKLVKEESA). The segment covering 298–313 (RSSPELTSESLTQRRQ) has biased composition (polar residues). 2 positions are modified to phosphoserine: Ser299 and Ser300. Over residues 427-444 (EDDRLVRGHKDPSGNKDL) the composition is skewed to basic and acidic residues. 2 stretches are compositionally biased toward basic and acidic residues: residues 570-582 (KKPE…ERSA) and 606-615 (ESRKTSERFR). A phosphoserine mark is found at Ser632, Ser666, Ser728, and Ser761. The segment at 743 to 771 (ASAHQKALARDQANEGRESAEPGEPDSST) is disordered. The span at 750 to 762 (LARDQANEGRESA) shows a compositional bias: basic and acidic residues. Tyr809 carries the phosphotyrosine modification. A Phosphothreonine modification is found at Thr811. Phosphoserine is present on residues Ser857, Ser877, and Ser881. Residues 887–909 (AWRPLVEHSGSKGMPGESGKTES) are disordered. A phosphoserine mark is found at Ser960, Ser1011, Ser1031, and Ser1077. Residues 1117 to 1137 (HTQEVEQSLKKKRVTESRESQ) form a disordered region. The segment covering 1119–1137 (QEVEQSLKKKRVTESRESQ) has biased composition (basic and acidic residues). Arg1159 is modified (omega-N-methylarginine). Phosphoserine occurs at positions 1181 and 1184. At Thr1186 the chain carries Phosphothreonine. Ser1190, Ser1278, and Ser1361 each carry phosphoserine. The interval 1375-1643 (SNINLRSVNL…KFLDWTELKR (269 aa)) is interaction with NEB. 5 Gelsolin-like repeats span residues 1397–1496 (KKLM…LGGQ), 1516–1638 (IETN…FLDW), 1708–1818 (VSVD…FQGG), 1837–1938 (WRLY…LGRR), and 1971–2078 (ATEF…FPSW). An HP domain is found at 2107–2170 (KLCKTIYPLA…VNLKKSKGLF (64 aa)).

It belongs to the villin/gelsolin family. In terms of assembly, associates with F-actin. Interacts with NEB. Interacts with MYH9. Interacts with MYLK. Interacts with TASOR. Interacts with TRIP6. Interacts with DYNLT1. Interacts with KIF14; at midbody during cytokinesis. Expressed in the heart, tongue and granular cells within the cerebellum.

Its subcellular location is the cell membrane. It localises to the cytoplasm. It is found in the cytoskeleton. The protein resides in the cell projection. The protein localises to the invadopodium. Its subcellular location is the podosome. It localises to the midbody. It is found in the cleavage furrow. Its function is as follows. Forms a high-affinity link between the actin cytoskeleton and the membrane. Is among the first costameric proteins to assemble during myogenesis and it contributes to myogenic membrane structure and differentiation. Appears to be involved in myosin II assembly. May modulate myosin II regulation through MLCK during cell spreading, an initial step in cell migration. May play a role in invadopodial function. In terms of biological role, may be involved in modulation of focal adhesions. Supervillin-mediated down-regulation of focal adhesions involves binding to TRIP6. Plays a role in cytokinesis through KIF14 interaction. The protein is Supervillin (Svil) of Mus musculus (Mouse).